Here is a 136-residue protein sequence, read N- to C-terminus: Transmembrane protein 203 (136 aa).

Residues 1–51 form an interaction with STING1 region; sequence MLFSLRELVQWLGFATFEIFVHLLALLVFSVLLALRVDGLTPGLSWWNVFV. Transmembrane regions (helical) follow at residues 14-34, 50-72, 81-101, and 112-132; these read FATF…VLLA, FVPF…VRLF, VLRL…EMLL, and LWFG…MIRA. Residues 52 to 136 are required for lysosomal localization of the STING-TMEM203 complex; the sequence is PFFAADGLST…LLMIRACRVN (85 aa).

In terms of assembly, homodimer. Interacts with ATP2A2 and ITPR3. Interacts with STIM1 and STING1 (via transmembrane domain).

The protein localises to the endoplasmic reticulum membrane. The protein resides in the endoplasmic reticulum-Golgi intermediate compartment. It localises to the lysosome membrane. Its function is as follows. Involved in the regulation of cellular calcium homeotasis. Required for spermatogenesis. Acts as a regulator of STING-mediated inflammatory signaling in macrophages. Forms a complex with STING, promoting the activity of TBK1 kinase and the transcription factor IRF3, leading to activation of type I interferon expression. This is Transmembrane protein 203 (Tmem203) from Mus musculus (Mouse).